The following is a 252-amino-acid chain: Thiazole synthase (252 aa).

The active-site Schiff-base intermediate with DXP is Lys-98. 1-deoxy-D-xylulose 5-phosphate is bound by residues Gly-159, 185 to 186 (AG), and 207 to 208 (AT).

This sequence belongs to the ThiG family. In terms of assembly, homotetramer. Forms heterodimers with either ThiH or ThiS.

It is found in the cytoplasm. It carries out the reaction [ThiS sulfur-carrier protein]-C-terminal-Gly-aminoethanethioate + 2-iminoacetate + 1-deoxy-D-xylulose 5-phosphate = [ThiS sulfur-carrier protein]-C-terminal Gly-Gly + 2-[(2R,5Z)-2-carboxy-4-methylthiazol-5(2H)-ylidene]ethyl phosphate + 2 H2O + H(+). It participates in cofactor biosynthesis; thiamine diphosphate biosynthesis. Catalyzes the rearrangement of 1-deoxy-D-xylulose 5-phosphate (DXP) to produce the thiazole phosphate moiety of thiamine. Sulfur is provided by the thiocarboxylate moiety of the carrier protein ThiS. In vitro, sulfur can be provided by H(2)S. The chain is Thiazole synthase from Mycolicibacterium smegmatis (strain ATCC 700084 / mc(2)155) (Mycobacterium smegmatis).